The sequence spans 53 residues: Large ribosomal subunit protein bL32c (53 aa).

This sequence belongs to the bacterial ribosomal protein bL32 family.

The protein localises to the plastid. The protein resides in the chloroplast. The chain is Large ribosomal subunit protein bL32c (rpl32) from Guillardia theta (Cryptophyte).